Consider the following 95-residue polypeptide: Synaptobrevin-A (95 aa).

The Cytoplasmic segment spans residues 1-70; the sequence is MSEPVNKVKQ…KRLMWCRNIK (70 aa). The v-SNARE coiled-coil homology domain occupies 7-67; that stretch reads KVKQTQQQVD…NEIKRLMWCR (61 aa). The chain crosses the membrane as a helical; Anchor for type IV membrane protein span at residues 71–91; that stretch reads LTLIIIAVVVLLLVVIIVPIV. Topologically, residues 92–95 are vesicular; that stretch reads LKFT.

The protein belongs to the synaptobrevin family.

The protein localises to the cytoplasmic vesicle. It is found in the secretory vesicle membrane. Its function is as follows. Involved in the targeting and/or fusion of transport vesicles to their target membrane. The chain is Synaptobrevin-A (sybA) from Dictyostelium discoideum (Social amoeba).